The primary structure comprises 224 residues: Abasic site processing protein YoqW (224 aa).

Catalysis depends on Cys-2, which acts as the Nucleophile. Cys-2 bears the Thiazolidine linkage to a ring-opened DNA abasic site mark. Glu-106 is a catalytic residue.

This sequence belongs to the SOS response-associated peptidase family.

With respect to regulation, formation and reversal of DNA-protein cross-link depends on DNA context. Catalyzes formation of the thiazolidine linkage in presence of abasic sites in single-stranded DNA. Mediates the reversal of the thiazolidine cross-link in presence of double stranded DNA. Its function is as follows. Sensor of abasic sites in single-stranded DNA (ssDNA) required to preserve genome integrity by promoting error-free repair of abasic sites. Recognizes and binds abasic sites in ssDNA at replication forks and chemically modifies the lesion by forming a covalent cross-link with DNA: forms a stable thiazolidine linkage between a ring-opened abasic site and the alpha-amino and sulfhydryl substituents of its N-terminal catalytic cysteine residue. The DNA-protein cross-link is then reversed: able to catalyze the reversal of the thiazolidine cross-link and cycle between a cross-link and a non-cross-linked state depending on DNA context: mediates self-reversal of the thiazolidine cross-link in double stranded DNA. May act as a protease: mediates autocatalytic processing of its N-terminal methionine in order to expose the catalytic cysteine. This chain is Abasic site processing protein YoqW (yoqW), found in Bacillus subtilis (strain 168).